Consider the following 338-residue polypeptide: Tagatose 1,6-diphosphate aldolase (338 aa).

The protein belongs to the aldolase LacD family.

The catalysed reaction is D-tagatofuranose 1,6-bisphosphate = D-glyceraldehyde 3-phosphate + dihydroxyacetone phosphate. It participates in carbohydrate metabolism; D-tagatose 6-phosphate degradation; D-glyceraldehyde 3-phosphate and glycerone phosphate from D-tagatose 6-phosphate: step 2/2. The sequence is that of Tagatose 1,6-diphosphate aldolase from Listeria monocytogenes serotype 4a (strain HCC23).